Reading from the N-terminus, the 274-residue chain is 4-deoxy-L-threo-5-hexosulose-uronate ketol-isomerase (274 aa).

Zn(2+) contacts are provided by His192, His194, Glu199, and His241.

The protein belongs to the KduI family. Requires Zn(2+) as cofactor.

The catalysed reaction is 5-dehydro-4-deoxy-D-glucuronate = 3-deoxy-D-glycero-2,5-hexodiulosonate. Its pathway is glycan metabolism; pectin degradation; 2-dehydro-3-deoxy-D-gluconate from pectin: step 4/5. Catalyzes the isomerization of 5-dehydro-4-deoxy-D-glucuronate to 3-deoxy-D-glycero-2,5-hexodiulosonate. This Cereibacter sphaeroides (strain ATCC 17025 / ATH 2.4.3) (Rhodobacter sphaeroides) protein is 4-deoxy-L-threo-5-hexosulose-uronate ketol-isomerase.